A 207-amino-acid polypeptide reads, in one-letter code: Ras-related protein Rab-7a (207 aa).

The residue at position 2 (threonine 2) is an N-acetylthreonine. 11 residues coordinate GTP: serine 17, glycine 18, valine 19, glycine 20, lysine 21, threonine 22, serine 23, serine 34, asparagine 35, tyrosine 37, and threonine 40. Residue threonine 22 coordinates Mg(2+). Residues 28 to 41 (YVNKKFSNQYKATI) carry the Switch 1 motif. Residues threonine 40 and aspartate 63 each contribute to the Mg(2+) site. Glycine 66 is a binding site for GTP. The Switch 2 motif lies at 67–82 (QERFQSLGVAFYRGAD). A Phosphoserine modification is found at serine 72. 5 residues coordinate GTP: asparagine 125, lysine 126, aspartate 128, alanine 156, and lysine 157. Glycyl lysine isopeptide (Lys-Gly) (interchain with G-Cter in ubiquitin) cross-links involve residues lysine 191 and lysine 194. 2 S-geranylgeranyl cysteine lipidation sites follow: cysteine 205 and cysteine 207. Cysteine 207 carries the cysteine methyl ester modification.

This sequence belongs to the small GTPase superfamily. Rab family. As to quaternary structure, interacts with NTRK1/TRKA. Interacts with RILP. Interacts with PSMA7. Interacts with RNF115. Interacts with FYCO1. Interacts with the PIK3C3/VPS34-PIK3R4 complex. The GTP-bound form interacts with OSBPL1A. The GTP-bound form interacts with RAC1. Interacts with CLN3. Interacts with CHM, the substrate-binding subunit of the Rab geranylgeranyltransferase complex. Interacts with C9orf72. Does not interact with HPS4 and the BLOC-3 complex (heterodimer of HPS1 and HPS4). Interacts with CLN5. Interacts with PLEKHM1 (via N- and C-terminus). Interacts with PRPH; the interaction is direct. Interacts with VPS13A. The GDP-bound form interacts with RIMOC1. Interacts with the MON1A-CCZ1B complex and this interaction is enhanced in the presence of RIMOC1. Interacts with VPS39 and VPS41. Forms a ternary complex with LAMP2 and RUFY4; the interaction with LAMP2 is mediated by RUFY4 (via RUN and coiled coil domains). Mg(2+) serves as cofactor. Post-translationally, deubiquitination at Lys-191 and Lys-194 by USP32. Phosphorylated at Ser-72 by LRRK1; phosphorylation is dependent on protein kinase C (PKC) activation of LRRK1. In terms of processing, prenylated. Prenylation is required for association with cellular membranes.

The protein resides in the cytoplasmic vesicle. Its subcellular location is the phagosome membrane. The protein localises to the late endosome membrane. It localises to the lysosome membrane. It is found in the melanosome membrane. The protein resides in the autophagosome membrane. Its subcellular location is the lipid droplet. The protein localises to the endosome membrane. It localises to the mitochondrion membrane. The enzyme catalyses GTP + H2O = GDP + phosphate + H(+). Its activity is regulated as follows. Regulated by guanine nucleotide exchange factors (GEFs) which promote the exchange of bound GDP for free GTP. Regulated by GTPase activating proteins (GAPs) which increase the GTP hydrolysis activity. Inhibited by GDP dissociation inhibitors (GDIs). In terms of biological role, the small GTPases Rab are key regulators of intracellular membrane trafficking, from the formation of transport vesicles to their fusion with membranes. Rabs cycle between an inactive GDP-bound form and an active GTP-bound form that is able to recruit to membranes different sets of downstream effectors directly responsible for vesicle formation, movement, tethering and fusion. In its active state, RAB7A binds to a variety of effector proteins playing a key role in the regulation of endo-lysosomal trafficking. Governs early-to-late endosomal maturation, microtubule minus-end as well as plus-end directed endosomal migration and positioning, and endosome-lysosome transport through different protein-protein interaction cascades. Also plays a central role in growth-factor-mediated cell signaling, nutrient-transporter-mediated nutrient uptake, neurotrophin transport in the axons of neurons and lipid metabolism. Also involved in regulation of some specialized endosomal membrane trafficking, such as maturation of melanosomes, pathogen-induced phagosomes (or vacuoles) and autophagosomes. Plays a role in the maturation and acidification of phagosomes that engulf pathogens, such as S.aureus and Mycobacteria. Plays a role in the fusion of phagosomes with lysosomes. In concert with RAC1, plays a role in regulating the formation of RBs (ruffled borders) in osteoclasts. Controls the endosomal trafficking and neurite outgrowth signaling of NTRK1/TRKA. Regulates the endocytic trafficking of the EGF-EGFR complex by regulating its lysosomal degradation. Involved in the ADRB2-stimulated lipolysis through lipophagy, a cytosolic lipase-independent autophagic pathway. Required for the exosomal release of SDCBP, CD63 and syndecan. Required for vesicular trafficking and cell surface expression of ACE2. May play a role in PRPH neuronal intermediate filament assembly. In Pongo abelii (Sumatran orangutan), this protein is Ras-related protein Rab-7a (RAB7A).